A 506-amino-acid polypeptide reads, in one-letter code: Maturase K (506 aa).

This sequence belongs to the intron maturase 2 family. MatK subfamily.

The protein localises to the plastid. The protein resides in the chloroplast. Functionally, usually encoded in the trnK tRNA gene intron. Probably assists in splicing its own and other chloroplast group II introns. The polypeptide is Maturase K (Pisum sativum (Garden pea)).